The primary structure comprises 113 residues: Large ribosomal subunit protein bL17 (113 aa).

It belongs to the bacterial ribosomal protein bL17 family. In terms of assembly, part of the 50S ribosomal subunit. Contacts protein L32.

The chain is Large ribosomal subunit protein bL17 from Clostridium perfringens (strain ATCC 13124 / DSM 756 / JCM 1290 / NCIMB 6125 / NCTC 8237 / Type A).